Here is a 260-residue protein sequence, read N- to C-terminus: Probable 6-oxopurine nucleoside phosphorylase (260 aa).

Phosphate-binding positions include S9 and 49 to 50 (RH). M182 is a substrate binding site. T183 serves as a coordination point for phosphate. 206-208 (NMA) contacts substrate.

It belongs to the PNP/MTAP phosphorylase family. MTAP subfamily. Homohexamer. Dimer of a homotrimer.

The enzyme catalyses a purine D-ribonucleoside + phosphate = a purine nucleobase + alpha-D-ribose 1-phosphate. The protein operates within purine metabolism; purine nucleoside salvage. Purine nucleoside phosphorylase which is highly specific for 6-oxopurine nucleosides. Cleaves guanosine or inosine to respective bases and sugar-1-phosphate molecules. Involved in purine salvage. The protein is Probable 6-oxopurine nucleoside phosphorylase of Moorella thermoacetica (strain ATCC 39073 / JCM 9320).